Reading from the N-terminus, the 206-residue chain is MGDLGKGYKLVFLGDQGVGKTSIITCFMYGKFDTSYQATIGIDFLSKTTRYEDRTFRLQLWDTAGQERFKSLVPSYIRDSSVAVIVYDVASKQSFINTSKWIEEVRAERGSYVIIVLVGNKTDLVNKRQVSIEEGENKAREFGALFMETSAKAGFNIKPLFCKITSALQGNEAVSWTKQEDLVDVNLKPLMFSSQANHQQESNCSC.

14–21 (GDQGVGKT) contributes to the GTP binding site. The short motif at 36–44 (YQATIGIDF) is the Effector region element. GTP-binding positions include 62–66 (DTAGQ), 120–123 (NKTD), and 150–151 (SA). 2 S-geranylgeranyl cysteine lipidation sites follow: Cys204 and Cys206. The residue at position 206 (Cys206) is a Cysteine methyl ester.

This sequence belongs to the small GTPase superfamily. Rab family.

It localises to the golgi apparatus membrane. Protein transport. Regulator of membrane traffic from the Golgi apparatus towards the endoplasmic reticulum (ER). The chain is Ras-related protein RABH1a (RABH1A) from Arabidopsis thaliana (Mouse-ear cress).